The sequence spans 563 residues: Putative inactive polypeptide N-acetylgalactosaminyltransferase 12 (563 aa).

Over 1-6 (MEVFAS) the chain is Cytoplasmic. The helical; Signal-anchor for type II membrane protein transmembrane segment at 7–29 (VLNCCFKYIVLPVWIFIVLLLLH) threads the bilayer. Residues 30–563 (RDLSSWDGLM…SVMQSANILV (534 aa)) lie on the Lumenal side of the membrane. An N-linked (GlcNAc...) asparagine glycan is attached at N50. A disulfide bridge links C97 with C334. A catalytic subdomain A region spans residues 109-225 (MKPASIIMIF…NGWLSPLLDT (117 aa)). The tract at residues 280-342 (PYEVAAVRTS…PCSRVGHLQP (63 aa)) is catalytic subdomain B. 2 N-linked (GlcNAc...) asparagine glycosylation sites follow: N389 and N428. A Ricin B-type lectin domain is found at 433-549 (ASGHVKTLEF…ANGKQRWILD (117 aa)). A disulfide bridge links C446 with C461. N-linked (GlcNAc...) asparagine glycans are attached at residues N464 and N469. 2 disulfide bridges follow: C485–C499 and C523–C537. N-linked (GlcNAc...) asparagine glycosylation is present at N552.

The protein belongs to the glycosyltransferase 2 family. GalNAc-T subfamily.

It is found in the golgi apparatus membrane. Functionally, probable inactive glycosyltransferase. This is Putative inactive polypeptide N-acetylgalactosaminyltransferase 12 (pgant12) from Drosophila melanogaster (Fruit fly).